We begin with the raw amino-acid sequence, 397 residues long: MGKENQQGYFGEFGGRYSPEILHDALVELETTYKKLKKNKHFKKELEYYRKNYIGRPSPLTYAERLSKVWGGAKIWLKREDLNHTGAHKINNTIGQVLIAKAMGKTRIIAETGAGQHGVATATVGAMFQMETVVYMGEEDLRRQELNAIRMRMLGAKVVGVSSGTATLKDATSEAMRDWALNVSNTHYIVGSSIGPHPFPTIVRDFQSVIGIESRKQFKKVNDKLPNAVIACVGGGSNAIGMFYGFIQDKKVKLFGVEAGGYSSDPGSHSATIQFGRTGFLHGTKTLVIQDDFGQIVPAHSVSAGLDYPGVGPEHAYFHKSGRVEYVNVDDEGALDAFIEVCRIEGIIPALETAHAFRYAKDLARTMSKKENILICLSGRGDKDVAEVSRLRKGEFI.

An N6-(pyridoxal phosphate)lysine modification is found at K89.

The protein belongs to the TrpB family. Tetramer of two alpha and two beta chains. It depends on pyridoxal 5'-phosphate as a cofactor.

It carries out the reaction (1S,2R)-1-C-(indol-3-yl)glycerol 3-phosphate + L-serine = D-glyceraldehyde 3-phosphate + L-tryptophan + H2O. It functions in the pathway amino-acid biosynthesis; L-tryptophan biosynthesis; L-tryptophan from chorismate: step 5/5. Its function is as follows. The beta subunit is responsible for the synthesis of L-tryptophan from indole and L-serine. The protein is Tryptophan synthase beta chain of Leptospira interrogans serogroup Icterohaemorrhagiae serovar copenhageni (strain Fiocruz L1-130).